We begin with the raw amino-acid sequence, 593 residues long: MSDDYFDRLFELAFVYINEDETIQSCSFRGQRWLEEAQTLEQKNSLLKAYYYYLKALKLAYEIPCRFEISVKSTHYGEFKQFQKLAIQAVSKAFTIKSKLAVKHYLPVIQISDALSLSKKSSLKVLFLNFYSQESSKGYVFSKHTIAIPISCLQSMDSSKIYDFLKSAPFHPSMVICYSLERYFEDVSLAYKLYSMLRSLKLDPHFMELANPKKVDSSLSYENYQPIGLTNLGNTCYMNCVLQCLFACKDLTIPMLQGRGLLQNINTKNPLGTGGKITSAFFSLLQSVLLNHGQRSISPRNFLEIVQSLNRDFSIDGQCDAQEFLNFFLDKLHEDLNSNASRSPIAPLTEDQLSAREELPLSHFSHIEWNLHLRSNKSIVVNNFVGQLCSRTQCMTCGRTSTTFAPFTSLAIPIDDVSHVVSLQECLLKFSAPELLQGHDGWHCPVCKVQRSAKKVIMISKLPEYLIIQIQRFKISVMGRKKIDTPLGLSLQIPSKMLVPPSFQSGIGYIPSNYNLFAFICHYGQLENGHYISDVLFNNEWCHIDDSIVRTVGGITDLREDFSSSYILFYKRSSLLEEFEDKCPKMTLKRNVK.

Positions 227–573 (IGLTNLGNTC…SSYILFYKRS (347 aa)) constitute a USP domain. Residue C236 is the Nucleophile of the active site. 2 positions are modified to phosphoserine: S338 and S343. H530 serves as the catalytic Proton acceptor.

It belongs to the peptidase C19 family. Interacts with sfp47.

It is found in the cytoplasm. The protein resides in the endosome. The catalysed reaction is Thiol-dependent hydrolysis of ester, thioester, amide, peptide and isopeptide bonds formed by the C-terminal Gly of ubiquitin (a 76-residue protein attached to proteins as an intracellular targeting signal).. Functionally, has an ATP-independent isopeptidase activity, cleaving at the C-terminus of the ubiquitin moiety. Acts late in the proteolytic pathway in conjunction with the 26S proteasome. Plays a role in avoiding DNA overreplication. This chain is Probable ubiquitin carboxyl-terminal hydrolase 4 (ubp4), found in Schizosaccharomyces pombe (strain 972 / ATCC 24843) (Fission yeast).